Reading from the N-terminus, the 506-residue chain is Anaerobic nitric oxide reductase transcription regulator NorR (506 aa).

Aspartate 57 is subject to 4-aspartylphosphate. The Sigma-54 factor interaction domain maps to 187 to 416 (MIGLSPAMTQ…LEHAIHRAVV (230 aa)). Residues 215–222 (GETGTGKE) and 278–287 (ADNGTLFLDE) contribute to the ATP site. A DNA-binding region (H-T-H motif) is located at residues 481-500 (WAASARALETDVANLHRLAK).

Its pathway is nitrogen metabolism; nitric oxide reduction. Its function is as follows. Required for the expression of anaerobic nitric oxide (NO) reductase, acts as a transcriptional activator for at least the norVW operon. Activation also requires sigma-54. The sequence is that of Anaerobic nitric oxide reductase transcription regulator NorR from Salmonella gallinarum (strain 287/91 / NCTC 13346).